The primary structure comprises 217 residues: Pre-mRNA-splicing factor sap62 (217 aa).

The Matrin-type zinc-finger motif lies at 54–84; the sequence is FECRLCLTTHANENSYLTHTQGKKHQTNLAR.

The protein belongs to the SF3A2 family. As to quaternary structure, belongs to the 40S cdc5-associated complex (or cwf complex), a spliceosome sub-complex reminiscent of a late-stage spliceosome composed of the U2, U5 and U6 snRNAs and at least brr2, cdc5, cwf2/prp3, cwf3/syf1, cwf4/syf3, cwf5/ecm2, spp42/cwf6, cwf7/spf27, cwf8, cwf9, cwf10, cwf11, cwf12, prp45/cwf13, cwf14, cwf15, cwf16, cwf17, cwf18, cwf19, cwf20, cwf21, cwf22, cwf23, cwf24, cwf25, cwf26, cyp7/cwf27, cwf28, cwf29/ist3, lea1, msl1, prp5/cwf1, prp10, prp12/sap130, prp17, prp22, sap61, sap62, sap114, sap145, slu7, smb1, smd1, smd3, smf1, smg1 and syf2.

The protein resides in the nucleus. It localises to the cytoplasm. Its function is as follows. Involved in mRNA splicing where it associates with cdc5 and the other cwf proteins as part of the spliceosome. The protein is Pre-mRNA-splicing factor sap62 (sap62) of Schizosaccharomyces pombe (strain 972 / ATCC 24843) (Fission yeast).